A 287-amino-acid chain; its full sequence is Beta-lactamase GES-5 (287 aa).

Positions 1–18 are cleaved as a signal peptide; sequence MRFIHALLLAGIAHSAYA. Cys-63 and Cys-233 form a disulfide bridge. Ser-64 acts as the Nucleophile; acyl-ester intermediate in catalysis. Residues Ser-64, Ser-125, Asn-127, Thr-230, Thr-232, and Arg-238 each contribute to the imipenem site.

Belongs to the class-A beta-lactamase family.

It is found in the secreted. The catalysed reaction is a beta-lactam + H2O = a substituted beta-amino acid. With respect to regulation, inhibited by the beta-lactamase-blocking agents clavulanic acid, sulbactam and tazobactam, via a covalent binding to Ser-64. Functionally, confers resistance to penicillins, cephalosporins and carbapenems. Has carbapenem-hydrolyzing activity. This is Beta-lactamase GES-5 from Klebsiella pneumoniae.